Here is a 751-residue protein sequence, read N- to C-terminus: Transposable element P transposase (751 aa).

A THAP-type zinc finger spans residues 1–77; that stretch reads MKYCKFCCKA…LNADAVPSKV (77 aa).

Its function is as follows. P-element transposase that specifically mediates transposition of P-elements. Mediates both; precise and imprecise excision. The sequence is that of Transposable element P transposase from Drosophila melanogaster (Fruit fly).